The sequence spans 90 residues: UPF0297 protein LVIS_1222 (90 aa).

The protein belongs to the UPF0297 family.

This is UPF0297 protein LVIS_1222 from Levilactobacillus brevis (strain ATCC 367 / BCRC 12310 / CIP 105137 / JCM 1170 / LMG 11437 / NCIMB 947 / NCTC 947) (Lactobacillus brevis).